Reading from the N-terminus, the 171-residue chain is 3-hydroxydecanoyl-[acyl-carrier-protein] dehydratase (171 aa).

Histidine 70 is an active-site residue.

Belongs to the thioester dehydratase family. FabA subfamily. As to quaternary structure, homodimer.

It is found in the cytoplasm. It carries out the reaction a (3R)-hydroxyacyl-[ACP] = a (2E)-enoyl-[ACP] + H2O. It catalyses the reaction (3R)-hydroxydecanoyl-[ACP] = (2E)-decenoyl-[ACP] + H2O. The enzyme catalyses (2E)-decenoyl-[ACP] = (3Z)-decenoyl-[ACP]. The protein operates within lipid metabolism; fatty acid biosynthesis. In terms of biological role, necessary for the introduction of cis unsaturation into fatty acids. Catalyzes the dehydration of (3R)-3-hydroxydecanoyl-ACP to E-(2)-decenoyl-ACP and then its isomerization to Z-(3)-decenoyl-ACP. Can catalyze the dehydratase reaction for beta-hydroxyacyl-ACPs with saturated chain lengths up to 16:0, being most active on intermediate chain length. In Pseudomonas putida (strain GB-1), this protein is 3-hydroxydecanoyl-[acyl-carrier-protein] dehydratase.